We begin with the raw amino-acid sequence, 473 residues long: BPI fold-containing family B member 3 (473 aa).

The first 20 residues, 1 to 20 (MMPGVYALLLLWGLATPCLG), serve as a signal peptide directing secretion. N139 is a glycosylation site (N-linked (GlcNAc...) asparagine). C161 and C196 are disulfide-bonded.

Belongs to the BPI/LBP/Plunc superfamily. BPI/LBP family. In terms of tissue distribution, highly expressed in olfactory mucosa but undetectable in thymus, kidney, lung, brain, spleen and liver.

It localises to the secreted. Functionally, may have the capacity to recognize and bind specific classes of odorants. May act as a carrier molecule, transporting odorants across the mucus layer to access receptor sites. May serve as a primary defense mechanism by recognizing and removing potentially harmful odorants or pathogenic microorganisms from the mucosa or clearing excess odorant from mucus to enable new odorant stimuli to be received. This chain is BPI fold-containing family B member 3, found in Rattus norvegicus (Rat).